Here is a 372-residue protein sequence, read N- to C-terminus: 4-hydroxy-3-methylbut-2-en-1-yl diphosphate synthase (flavodoxin) (372 aa).

[4Fe-4S] cluster contacts are provided by cysteine 270, cysteine 273, cysteine 305, and glutamate 312.

Belongs to the IspG family. It depends on [4Fe-4S] cluster as a cofactor.

It carries out the reaction (2E)-4-hydroxy-3-methylbut-2-enyl diphosphate + oxidized [flavodoxin] + H2O + 2 H(+) = 2-C-methyl-D-erythritol 2,4-cyclic diphosphate + reduced [flavodoxin]. The protein operates within isoprenoid biosynthesis; isopentenyl diphosphate biosynthesis via DXP pathway; isopentenyl diphosphate from 1-deoxy-D-xylulose 5-phosphate: step 5/6. Converts 2C-methyl-D-erythritol 2,4-cyclodiphosphate (ME-2,4cPP) into 1-hydroxy-2-methyl-2-(E)-butenyl 4-diphosphate. This Escherichia coli O9:H4 (strain HS) protein is 4-hydroxy-3-methylbut-2-en-1-yl diphosphate synthase (flavodoxin).